The primary structure comprises 326 residues: Porin-like protein H (326 aa).

Residues 1–19 (MKKTLVALAILTAAGSANA) form the signal peptide.

The protein belongs to the Gram-negative porin family. Oligomer.

It is found in the cell outer membrane. In terms of biological role, forms pores that allow passive diffusion of small molecules across the outer membrane. This is Porin-like protein H (ompH) from Photobacterium profundum (strain SS9).